Consider the following 526-residue polypeptide: Phosphoenolpyruvate carboxylase (526 aa).

Belongs to the PEPCase type 2 family. In terms of assembly, homotetramer. Requires Mg(2+) as cofactor.

The enzyme catalyses oxaloacetate + phosphate = phosphoenolpyruvate + hydrogencarbonate. In terms of biological role, catalyzes the irreversible beta-carboxylation of phosphoenolpyruvate (PEP) to form oxaloacetate (OAA), a four-carbon dicarboxylic acid source for the tricarboxylic acid cycle. The polypeptide is Phosphoenolpyruvate carboxylase (Methanosarcina acetivorans (strain ATCC 35395 / DSM 2834 / JCM 12185 / C2A)).